The primary structure comprises 227 residues: Enolase-phosphatase E1 (227 aa).

The protein belongs to the HAD-like hydrolase superfamily. MasA/MtnC family. In terms of assembly, monomer. Requires Mg(2+) as cofactor.

The enzyme catalyses 5-methylsulfanyl-2,3-dioxopentyl phosphate + H2O = 1,2-dihydroxy-5-(methylsulfanyl)pent-1-en-3-one + phosphate. Its pathway is amino-acid biosynthesis; L-methionine biosynthesis via salvage pathway; L-methionine from S-methyl-5-thio-alpha-D-ribose 1-phosphate: step 3/6. The protein operates within amino-acid biosynthesis; L-methionine biosynthesis via salvage pathway; L-methionine from S-methyl-5-thio-alpha-D-ribose 1-phosphate: step 4/6. Functionally, bifunctional enzyme that catalyzes the enolization of 2,3-diketo-5-methylthiopentyl-1-phosphate (DK-MTP-1-P) into the intermediate 2-hydroxy-3-keto-5-methylthiopentenyl-1-phosphate (HK-MTPenyl-1-P), which is then dephosphorylated to form the acireductone 1,2-dihydroxy-3-keto-5-methylthiopentene (DHK-MTPene). The chain is Enolase-phosphatase E1 from Azotobacter vinelandii (strain DJ / ATCC BAA-1303).